A 76-amino-acid chain; its full sequence is Sec-independent protein translocase protein TatA (76 aa).

The helical transmembrane segment at 1 to 21 (MGGLSIWHWLIVLLIVALVFG) threads the bilayer. Residues 40-76 (KDGMKEGETPADAQQLPRTGTVDVNAKETTRSDSNKA) form a disordered region. The segment covering 64 to 76 (NAKETTRSDSNKA) has biased composition (basic and acidic residues).

It belongs to the TatA/E family. As to quaternary structure, the Tat system comprises two distinct complexes: a TatABC complex, containing multiple copies of TatA, TatB and TatC subunits, and a separate TatA complex, containing only TatA subunits. Substrates initially bind to the TatABC complex, which probably triggers association of the separate TatA complex to form the active translocon.

It is found in the cell inner membrane. Functionally, part of the twin-arginine translocation (Tat) system that transports large folded proteins containing a characteristic twin-arginine motif in their signal peptide across membranes. TatA could form the protein-conducting channel of the Tat system. This is Sec-independent protein translocase protein TatA from Burkholderia ambifaria (strain MC40-6).